The primary structure comprises 382 residues: Albumin (382 aa).

2 consecutive Albumin domains span residues Lys-1–Glu-178 and Ala-179–Gln-377. Disulfide bonds link Cys-2-Cys-48, Cys-47-Cys-55, Cys-67-Cys-81, Cys-80-Cys-91, Cys-116-Cys-161, Cys-160-Cys-169, Cys-192-Cys-238, Cys-237-Cys-248, Cys-261-Cys-277, Cys-276-Cys-287, Cys-314-Cys-359, and Cys-358-Cys-367. Asp-51 and Glu-54 together coordinate Ca(2+). Position 51 (Asp-51) interacts with Zn(2+).

It belongs to the ALB/AFP/VDB family. Plasma.

The protein resides in the secreted. Its function is as follows. Serum albumin, the main protein of plasma, has a good binding capacity for water, Ca(2+), Na(+), K(+), fatty acids, hormones, bilirubin and drugs. Its main function is the regulation of the colloidal osmotic pressure of blood. The chain is Albumin (ALB) from Aquarana catesbeiana (American bullfrog).